The following is a 398-amino-acid chain: Phosphoglycerate kinase (398 aa).

Residues 21-23 (DFN), Arg-36, 59-62 (HLGR), Arg-119, and Arg-157 contribute to the substrate site. ATP contacts are provided by residues Lys-208, Gly-296, Glu-327, and 354–357 (GGDS).

It belongs to the phosphoglycerate kinase family. Monomer.

The protein localises to the cytoplasm. It catalyses the reaction (2R)-3-phosphoglycerate + ATP = (2R)-3-phospho-glyceroyl phosphate + ADP. It functions in the pathway carbohydrate degradation; glycolysis; pyruvate from D-glyceraldehyde 3-phosphate: step 2/5. This Streptococcus pyogenes serotype M18 (strain MGAS8232) protein is Phosphoglycerate kinase.